We begin with the raw amino-acid sequence, 389 residues long: Lipid-A-disaccharide synthase (389 aa).

This sequence belongs to the LpxB family.

It carries out the reaction a lipid X + a UDP-2-N,3-O-bis[(3R)-3-hydroxyacyl]-alpha-D-glucosamine = a lipid A disaccharide + UDP + H(+). It participates in bacterial outer membrane biogenesis; LPS lipid A biosynthesis. In terms of biological role, condensation of UDP-2,3-diacylglucosamine and 2,3-diacylglucosamine-1-phosphate to form lipid A disaccharide, a precursor of lipid A, a phosphorylated glycolipid that anchors the lipopolysaccharide to the outer membrane of the cell. The polypeptide is Lipid-A-disaccharide synthase (Burkholderia vietnamiensis (strain G4 / LMG 22486) (Burkholderia cepacia (strain R1808))).